Here is an 82-residue protein sequence, read N- to C-terminus: Protein Vpu (82 aa).

The Extracellular portion of the chain corresponds to 1–7 (MQPLQIS). A helical transmembrane segment spans residues 8–28 (AIVALVVAAIIAIVVWSIALL). Residues 29 to 82 (EYRKLLRQRKIDRLIDRIRERAEDSGNESEGDQEELSALVEMGGHDAPWDIDDL) are Cytoplasmic-facing. Phosphoserine; by host CK2 is present on residues serine 53 and serine 57.

This sequence belongs to the HIV-1 VPU protein family. Homopentamer. Interacts with host CD4 and BRTC; these interactions induce proteasomal degradation of CD4. Interacts with host BST2; this interaction leads to the degradation of host BST2. Interacts with host FBXW11. Interacts with host AP1M1; this interaction plays a role in the mistrafficking and subsequent degradation of host BST2. Interacts with host RANBP2; this interaction allows Vpu to down-regulate host BLM sumoylation. Post-translationally, phosphorylated by host CK2. This phosphorylation is necessary for interaction with human BTRC and degradation of CD4.

The protein localises to the host membrane. Its activity is regulated as follows. Ion channel activity is inhibited by hexamethylene amiloride in vitro. Functionally, enhances virion budding by targeting host CD4 and Tetherin/BST2 to proteasome degradation. Degradation of CD4 prevents any unwanted premature interactions between viral Env and its host receptor CD4 in the endoplasmic reticulum. Degradation of antiretroviral protein Tetherin/BST2 is important for virion budding, as BST2 tethers new viral particles to the host cell membrane. Mechanistically, Vpu bridges either CD4 or BST2 to BTRC, a substrate recognition subunit of the Skp1/Cullin/F-box protein E3 ubiquitin ligase, induces their ubiquitination and subsequent proteasomal degradation. The alteration of the E3 ligase specificity by Vpu seems to promote the degradation of host IKBKB, leading to NF-kappa-B down-regulation and subsequent apoptosis. Acts as a viroporin that forms an oligomeric ion channel in membranes. Modulates the host DNA repair mechanisms to promote degradation of nuclear viral cDNA in cells that are already productively infected in order to suppress immune sensing and proviral hyper-integration (superinfection). Manipulates PML-NBs and modulates SUMOylation of host BLM protein thereby enhancing its DNA-end processing activity toward viral unintegrated linear DNA. Also inhibits RAD52-mediated homologous repair of viral cDNA, preventing the generation of dead-end circular forms of single copies of the long terminal repeat and permitting sustained nucleolytic attack. This is Protein Vpu from Homo sapiens (Human).